A 461-amino-acid polypeptide reads, in one-letter code: D-arabinono-1,4-lactone oxidase (461 aa).

In terms of domain architecture, FAD-binding PCMH-type spans 24-194; it reads FSAISLGLRC…VDITISVVPA (171 aa). H61 is subject to Pros-8alpha-FAD histidine.

It belongs to the oxygen-dependent FAD-linked oxidoreductase family. FAD serves as cofactor.

The protein localises to the mitochondrion membrane. The enzyme catalyses D-arabinono-1,4-lactone + O2 = dehydro-D-arabinono-1,4-lactone + H2O2 + H(+). The protein operates within cofactor biosynthesis; D-erythroascorbate biosynthesis; dehydro-D-arabinono-1,4-lactone from D-arabinose: step 2/2. The protein is D-arabinono-1,4-lactone oxidase (alo1) of Schizosaccharomyces pombe (strain 972 / ATCC 24843) (Fission yeast).